We begin with the raw amino-acid sequence, 305 residues long: RxLR effector protein 17 (305 aa).

A signal peptide spans 1–24 (MQSILWFALIASVVFLVLVDLASG). Residues 45–60 (RLLRAAHLDRKLSEER) carry the RxLR-dEER motif. 2 N-linked (GlcNAc...) asparagine glycosylation sites follow: N207 and N227. Positions 247-269 (LHLKWAVEAKSPKDVVERILKDL) are w motif.

This sequence belongs to the RxLR effector family. As to quaternary structure, interacts with host A.thaliana At1G14340.

It localises to the secreted. Its subcellular location is the host cell membrane. Secreted effector that confers enhanced plant susceptibility during both compatible and incompatible interactions between the pathogen and its host. Promotes the sexual reproduction of the pathogen in the plant host. The protein is RxLR effector protein 17 of Hyaloperonospora arabidopsidis (strain Emoy2) (Downy mildew agent).